A 297-amino-acid chain; its full sequence is NADPH-dependent 1-acyldihydroxyacetone phosphate reductase (297 aa).

The GXSXG motif lies at G16–G20. S18 serves as the catalytic Nucleophile; for lipase activity. I21, D64, N93, R126, Y157, K161, V190, and T192 together coordinate NADP(+). The active-site Proton acceptor is Y157. K161 acts as the Lowers pKa of active site Tyr in catalysis.

It belongs to the short-chain dehydrogenases/reductases (SDR) family.

The protein localises to the lipid droplet. It localises to the mitochondrion outer membrane. It is found in the endoplasmic reticulum. It catalyses the reaction a 1-acylglycerone 3-phosphate + NADPH + H(+) = a 1-acyl-sn-glycero-3-phosphate + NADP(+). It carries out the reaction 1-hexadecanoyl-sn-glycero-3-phosphate + NADP(+) = 1-hexadecanoylglycerone 3-phosphate + NADPH + H(+). The catalysed reaction is a triacylglycerol + H2O = a diacylglycerol + a fatty acid + H(+). The enzyme catalyses 1,2,3-tri-(9Z-octadecenoyl)-glycerol + H2O = di-(9Z)-octadecenoylglycerol + (9Z)-octadecenoate + H(+). Its activity is regulated as follows. Inhibited by divalent cations and N-ethylmaleimide. Activity is reduced under anaerobic growth conditions. Its function is as follows. Can convert acyl and alkyl dihydroxyacetone-phosphate (DHAP) into glycerolipids and ether lipids, respectively. Required for the biosynthesis of phosphatidic acid via the DHAP pathway, where it reduces 1-acyl DHAP to lysophosphatidic acid (LPA). Also has triacylglycerol (TAG) lipase activity. Involved in the mobilization of the non-polar storage lipids triacylglycerols (TAGs) from lipid particles by hydrolysis of TAGs. Required for spore germination. Plays a role in cell wall biogenesis, but this effect may be indirect by affecting the activities of cell wall synthesis enzymes. Lipolysis of TAG by AYR1 is essential for starvation-induced autophagy. Forms an NADPH-regulated cation-selective channel in the mitochondrial outer membrane. This chain is NADPH-dependent 1-acyldihydroxyacetone phosphate reductase, found in Saccharomyces cerevisiae (strain ATCC 204508 / S288c) (Baker's yeast).